A 1486-amino-acid chain; its full sequence is Chromosome partition protein MukB (1486 aa).

34 to 41 serves as a coordination point for ATP; that stretch reads GGNGAGKS. Coiled-coil stretches lie at residues 326–418, 444–480, and 509–603; these read LEAD…QYNQ, LETF…QAYQ, and RHLA…RAPV. Residues 666–783 form a flexible hinge region; it reads PGGSEDQRLN…EVPLFGRAAR (118 aa). Coiled coils occupy residues 835-923, 977-1115, and 1209-1266; these read EAEI…AKLE, EMLS…TAKA, and VEAI…QNVS.

The protein belongs to the SMC family. MukB subfamily. As to quaternary structure, homodimerization via its hinge domain. Binds to DNA via its C-terminal region. Interacts, and probably forms a ternary complex, with MukE and MukF via its C-terminal region. The complex formation is stimulated by calcium or magnesium. Interacts with tubulin-related protein FtsZ.

It is found in the cytoplasm. It localises to the nucleoid. Its function is as follows. Plays a central role in chromosome condensation, segregation and cell cycle progression. Functions as a homodimer, which is essential for chromosome partition. Involved in negative DNA supercoiling in vivo, and by this means organize and compact chromosomes. May achieve or facilitate chromosome segregation by condensation DNA from both sides of a centrally located replisome during cell division. The polypeptide is Chromosome partition protein MukB (Escherichia coli (strain K12 / MC4100 / BW2952)).